A 229-amino-acid polypeptide reads, in one-letter code: Large ribosomal subunit protein uL1 (229 aa).

This sequence belongs to the universal ribosomal protein uL1 family. As to quaternary structure, part of the 50S ribosomal subunit.

Its function is as follows. Binds directly to 23S rRNA. The L1 stalk is quite mobile in the ribosome, and is involved in E site tRNA release. Protein L1 is also a translational repressor protein, it controls the translation of the L11 operon by binding to its mRNA. The protein is Large ribosomal subunit protein uL1 of Lactiplantibacillus plantarum (strain ATCC BAA-793 / NCIMB 8826 / WCFS1) (Lactobacillus plantarum).